We begin with the raw amino-acid sequence, 208 residues long: Small ribosomal subunit protein uS4 (208 aa).

The S4 RNA-binding domain maps to 95–157 (RRIDNIVYRA…DSLKKLVRSN (63 aa)).

It belongs to the universal ribosomal protein uS4 family. Part of the 30S ribosomal subunit. Contacts protein S5. The interaction surface between S4 and S5 is involved in control of translational fidelity.

One of the primary rRNA binding proteins, it binds directly to 16S rRNA where it nucleates assembly of the body of the 30S subunit. In terms of biological role, with S5 and S12 plays an important role in translational accuracy. The protein is Small ribosomal subunit protein uS4 of Borrelia duttonii (strain Ly).